Consider the following 347-residue polypeptide: Haptoglobin (347 aa).

The N-terminal stretch at 1–18 is a signal peptide; it reads MRALGAVVTLLLWGQLFA. One can recognise a Sushi domain in the interval 31–88; it reads DSCPKPPEIANGYVEHLVRYRCRQFYKLQTEGDGIYTLNSEKQWVNPAAGDKLPKCEA. Intrachain disulfides connect Cys52–Cys86, Cys90–Cys207, Cys250–Cys281, and Cys292–Cys322. The Peptidase S1 domain maps to 103–345; the sequence is IIGGSMDAKG…LKDWVQETMA (243 aa). N-linked (GlcNAc...) asparagine glycans are attached at residues Asn148 and Asn152. An interaction with CD163 region spans residues 259-264; it reads VPEKKG.

Belongs to the peptidase S1 family. As to quaternary structure, tetramer of two alpha and two beta chains; disulfide-linked. The hemoglobin/haptoglobin complex is composed of a haptoglobin dimer bound to two hemoglobin alpha-beta dimers. Interacts with CD163. Interacts with ERGIC3. In terms of tissue distribution, expressed by the liver and secreted in plasma.

It localises to the secreted. Functionally, as a result of hemolysis, hemoglobin is found to accumulate in the kidney and is secreted in the urine. Haptoglobin captures, and combines with free plasma hemoglobin to allow hepatic recycling of heme iron and to prevent kidney damage. Haptoglobin also acts as an antioxidant, has antibacterial activity and plays a role in modulating many aspects of the acute phase response. Hemoglobin/haptoglobin complexes are rapidly cleared by the macrophage CD163 scavenger receptor expressed on the surface of liver Kupfer cells through an endocytic lysosomal degradation pathway. In Rattus norvegicus (Rat), this protein is Haptoglobin (Hp).